The sequence spans 171 residues: Ribosome maturation factor RimP (171 aa).

It belongs to the RimP family.

The protein resides in the cytoplasm. Functionally, required for maturation of 30S ribosomal subunits. The chain is Ribosome maturation factor RimP from Anaeromyxobacter sp. (strain K).